Consider the following 330-residue polypeptide: Phosphate acyltransferase (330 aa).

Belongs to the PlsX family. In terms of assembly, homodimer. Probably interacts with PlsY.

It localises to the cytoplasm. It carries out the reaction a fatty acyl-[ACP] + phosphate = an acyl phosphate + holo-[ACP]. Its pathway is lipid metabolism; phospholipid metabolism. Catalyzes the reversible formation of acyl-phosphate (acyl-PO(4)) from acyl-[acyl-carrier-protein] (acyl-ACP). This enzyme utilizes acyl-ACP as fatty acyl donor, but not acyl-CoA. The chain is Phosphate acyltransferase from Lactobacillus delbrueckii subsp. bulgaricus (strain ATCC BAA-365 / Lb-18).